Reading from the N-terminus, the 352-residue chain is UDP-N-acetylglucosamine--N-acetylmuramyl-(pentapeptide) pyrophosphoryl-undecaprenol N-acetylglucosamine transferase 3 (352 aa).

UDP-N-acetyl-alpha-D-glucosamine-binding positions include 11 to 13 (SAG), Arg164, Ser194, and Gln289.

Belongs to the glycosyltransferase 28 family. MurG subfamily.

The protein localises to the cell membrane. It catalyses the reaction di-trans,octa-cis-undecaprenyl diphospho-N-acetyl-alpha-D-muramoyl-L-alanyl-D-glutamyl-meso-2,6-diaminopimeloyl-D-alanyl-D-alanine + UDP-N-acetyl-alpha-D-glucosamine = di-trans,octa-cis-undecaprenyl diphospho-[N-acetyl-alpha-D-glucosaminyl-(1-&gt;4)]-N-acetyl-alpha-D-muramoyl-L-alanyl-D-glutamyl-meso-2,6-diaminopimeloyl-D-alanyl-D-alanine + UDP + H(+). It functions in the pathway cell wall biogenesis; peptidoglycan biosynthesis. Cell wall formation. Catalyzes the transfer of a GlcNAc subunit on undecaprenyl-pyrophosphoryl-MurNAc-pentapeptide (lipid intermediate I) to form undecaprenyl-pyrophosphoryl-MurNAc-(pentapeptide)GlcNAc (lipid intermediate II). In Bacillus thuringiensis (strain Al Hakam), this protein is UDP-N-acetylglucosamine--N-acetylmuramyl-(pentapeptide) pyrophosphoryl-undecaprenol N-acetylglucosamine transferase 3.